A 327-amino-acid chain; its full sequence is Inactive peptidyl-prolyl cis-trans isomerase FKBP6 (327 aa).

The PPIase FKBP-type domain occupies D54 to L143. TPR repeat units lie at residues A171–R204, L219–N252, and A253–N286.

The protein belongs to the FKBP6 family. In terms of assembly, interacts (via TPR repeats) with HSP90. Interacts with HSP72/HSPA2 and CLTC. Interacts with GAPDH; leading to inhibit GAPDH catalytic activity. As to expression, detected in all tissues examined, with higher expression in testis, heart, skeletal muscle, liver, and kidney.

The protein resides in the cytoplasm. The protein localises to the nucleus. Its function is as follows. Has an essential role in spermatogenesis. It is required to repress transposable elements and prevent their mobilization, which is essential for the germline integrity. Acts via the piRNA metabolic process, which mediates the repression of transposable elements during meiosis by forming complexes composed of piRNAs and Piwi proteins and govern the methylation and subsequent repression of transposons. Acts as a co-chaperone via its interaction with HSP90 and is required for the piRNA amplification process, the secondary piRNA biogenesis. May be required together with HSP90 in removal of 16 nucleotide ping-pong by-products from Piwi complexes, possibly facilitating turnover of Piwi complexes. The sequence is that of Inactive peptidyl-prolyl cis-trans isomerase FKBP6 (FKBP6) from Homo sapiens (Human).